We begin with the raw amino-acid sequence, 111 residues long: uncharacterized protein (111 aa).

The chain crosses the membrane as a helical span at residues 27–47 (HLFHFPSISFFFFFFFFFFSF).

It localises to the membrane. This is an uncharacterized protein from Saccharomyces cerevisiae (strain ATCC 204508 / S288c) (Baker's yeast).